We begin with the raw amino-acid sequence, 345 residues long: MTRLPLLLHSPRFAAALTTPPPPPLPPARRLVAAAAGGDLSLAMSAATGEYPVPVSPPYPAASKDVELRRAMTASARSAAYSSAPVVFEDEWLAVVDKPAGVYCDALLSALPCSAATLGDEATKPNLHLANRLDRDTSGLMVITKCNKVAGKLVKAFTEHKVKKTYLALCIGYPPAWEKIKICSGHGRSKHGAWRVYAMSDVGRSLPGGSVVRDMSTRFEVLGINGKGQFREPSNFEVDETESITVQEKAADLTSDGDEKNSIILVRAYPQSGRTHQIRLHCQYLGFPIRGDVKYSGVIEWNGVDYDGHALHAESLSFVHPVTGLPVTFRSPLPSWANEFISTMA.

Residue aspartate 134 is part of the active site.

Belongs to the pseudouridine synthase RluA family.

It catalyses the reaction a uridine in RNA = a pseudouridine in RNA. In Oryza sativa subsp. japonica (Rice), this protein is RNA pseudouridine synthase 1.